Consider the following 595-residue polypeptide: Acriflavine sensitivity control protein acr-2 (595 aa).

The zn(2)-C6 fungal-type DNA-binding region spans 22–49 (CYNCHRKRLRCDKSLPACLKCSINGEEC). Low complexity predominate over residues 69–88 (TTRTTNKTNFNGTNTTTPRT). The segment at 69 to 172 (TTRTTNKTNF…PDDNPDPSSQ (104 aa)) is disordered. Residues 89 to 117 (VKSSTPTQAPTPSDSPRQLDTDVTSSSAP) show a composition bias toward polar residues. Over residues 118–138 (SHTCSRSTTTSTTTTRISSPT) the composition is skewed to low complexity.

Its subcellular location is the nucleus. In terms of biological role, probable transcriptional regulator. The chain is Acriflavine sensitivity control protein acr-2 (acr-2) from Neurospora crassa (strain ATCC 24698 / 74-OR23-1A / CBS 708.71 / DSM 1257 / FGSC 987).